The sequence spans 50 residues: Photosystem II reaction center protein M (50 aa).

A helical membrane pass occupies residues glycine 7–isoleucine 27. The tract at residues aspartate 31 to serine 50 is disordered.

This sequence belongs to the PsbM family. PSII is composed of 1 copy each of membrane proteins PsbA, PsbB, PsbC, PsbD, PsbE, PsbF, PsbH, PsbI, PsbJ, PsbK, PsbL, PsbM, PsbT, PsbX, PsbY, Psb30/Ycf12, peripheral proteins PsbO, CyanoQ (PsbQ), PsbU, PsbV and a large number of cofactors. It forms dimeric complexes.

The protein localises to the cellular thylakoid membrane. Its function is as follows. One of the components of the core complex of photosystem II (PSII). PSII is a light-driven water:plastoquinone oxidoreductase that uses light energy to abstract electrons from H(2)O, generating O(2) and a proton gradient subsequently used for ATP formation. It consists of a core antenna complex that captures photons, and an electron transfer chain that converts photonic excitation into a charge separation. This subunit is found at the monomer-monomer interface. This is Photosystem II reaction center protein M from Prochlorococcus marinus (strain SARG / CCMP1375 / SS120).